Here is a 246-residue protein sequence, read N- to C-terminus: MRISILTIFPEMVEIVKKYGVISRAIKNGILEIEIFNLRDFTNDKHKTVDDYPFGGGPGMVMKPEPFFNFFEYYKERYGNTYTILTSPQGDRLTNHLVKELSEKESILIICGRYEGIDERVTKFVDREISIGDYVLTGGELPAMVIVDAVSRFIPDVIDKKSVEQETFNTGLLDHPHYTRPRNYKGLEVPEVLLSGDHKKIEIWRRKMALKKTMLKRPDLFLNKDLDGVDKVALLDLFRELINNAK.

S-adenosyl-L-methionine contacts are provided by residues Gly-112 and 131 to 136; that span reads IGDYVL.

Belongs to the RNA methyltransferase TrmD family. Homodimer.

It localises to the cytoplasm. The catalysed reaction is guanosine(37) in tRNA + S-adenosyl-L-methionine = N(1)-methylguanosine(37) in tRNA + S-adenosyl-L-homocysteine + H(+). Functionally, specifically methylates guanosine-37 in various tRNAs. This Thermosipho melanesiensis (strain DSM 12029 / CIP 104789 / BI429) protein is tRNA (guanine-N(1)-)-methyltransferase.